The primary structure comprises 212 residues: MFLDELISEFDRGLRSMTGVSRMSRPLPVPQESAVTEAAPELSPAERAHSAGLMRVNHVGEVCAQALYQAQKLATRSPSLRAVFNHAAIEEEDHLAWTAKRLEALDSRPSLLNPLWYTGALAIGLAAGRMGDRVSLGFMAETERQVEQHLDSHLEQLPEADRESRAIVEQMRVDEVEHGKAAMEAGGIELPFPVRGLMRAVSKVMTRTAYYI.

The segment at 21–42 (SRMSRPLPVPQESAVTEAAPEL) is disordered. Residues E61, E91, H94, E143, E175, and H178 each contribute to the Fe cation site.

Belongs to the COQ7 family. Fe cation serves as cofactor.

It localises to the cell membrane. It catalyses the reaction a 5-methoxy-2-methyl-3-(all-trans-polyprenyl)benzene-1,4-diol + AH2 + O2 = a 3-demethylubiquinol + A + H2O. It participates in cofactor biosynthesis; ubiquinone biosynthesis. Functionally, catalyzes the hydroxylation of 2-nonaprenyl-3-methyl-6-methoxy-1,4-benzoquinol during ubiquinone biosynthesis. The polypeptide is 3-demethoxyubiquinol 3-hydroxylase (Paraburkholderia xenovorans (strain LB400)).